We begin with the raw amino-acid sequence, 305 residues long: uncharacterized protein (305 aa).

The segment at 208-236 (SYAQSPAVKKKKWRHSGGKKNNPRENHID) is disordered. The segment covering 215–225 (VKKKKWRHSGG) has biased composition (basic residues).

This is an uncharacterized protein from Bacillus subtilis (strain 168).